The following is a 430-amino-acid chain: Nitroalkane oxidase (430 aa).

FAD-binding positions include leucine 132–serine 135, valine 140–asparagine 142, tryptophan 170–threonine 172, arginine 301, glutamine 311, asparagine 372–isoleucine 376, and isoleucine 397–glycine 401. The active-site Proton acceptor is the aspartate 399.

The protein belongs to the acyl-CoA dehydrogenase family. In terms of assembly, homotetramer. The cofactor is FAD.

The enzyme catalyses a primary nitroalkane + O2 + H2O = an aldehyde + nitrite + H2O2 + H(+). It carries out the reaction a secondary nitroalkane + O2 + H2O = a ketone + nitrite + H2O2 + H(+). In terms of biological role, nitroalkane oxidase (NAO) catalyzes the oxidation of nitroalkanes to the corresponding aldehydes or ketones with the release of nitrite and the consumption of molecular oxygen to yield hydrogen peroxide. NAO is unusual, since it catalyzes substrate oxidation by removing a substrate proton to form a carbanion intermediate. Prefers longer nitroalkanes, with 1-nitrohexane having the highest activity. This Podospora anserina (strain S / ATCC MYA-4624 / DSM 980 / FGSC 10383) (Pleurage anserina) protein is Nitroalkane oxidase.